Reading from the N-terminus, the 151-residue chain is Methylated-DNA--protein-cysteine methyltransferase (151 aa).

Cys119 serves as the catalytic Nucleophile; methyl group acceptor.

Belongs to the MGMT family.

The protein localises to the cytoplasm. It carries out the reaction a 6-O-methyl-2'-deoxyguanosine in DNA + L-cysteinyl-[protein] = S-methyl-L-cysteinyl-[protein] + a 2'-deoxyguanosine in DNA. It catalyses the reaction a 4-O-methyl-thymidine in DNA + L-cysteinyl-[protein] = a thymidine in DNA + S-methyl-L-cysteinyl-[protein]. Involved in the cellular defense against the biological effects of O6-methylguanine (O6-MeG) and O4-methylthymine (O4-MeT) in DNA. Repairs the methylated nucleobase in DNA by stoichiometrically transferring the methyl group to a cysteine residue in the enzyme. This is a suicide reaction: the enzyme is irreversibly inactivated. The sequence is that of Methylated-DNA--protein-cysteine methyltransferase from Saccharolobus islandicus (strain L.S.2.15 / Lassen #1) (Sulfolobus islandicus).